Reading from the N-terminus, the 92-residue chain is Long neurotoxin 77 (92 aa).

Residues 1-21 form the signal peptide; it reads MKTLLLTLVVVTIVCLDLGDS. 5 disulfides stabilise this stretch: Cys-24-Cys-41, Cys-34-Cys-62, Cys-47-Cys-51, Cys-66-Cys-77, and Cys-78-Cys-83.

It belongs to the three-finger toxin family. Long-chain subfamily. Type II alpha-neurotoxin sub-subfamily. In terms of tissue distribution, expressed by the venom gland.

Its subcellular location is the secreted. Binds with high affinity to muscular (alpha-1/CHRNA1) and neuronal (alpha-7/CHRNA7) nicotinic acetylcholine receptor (nAChR) and inhibits acetylcholine from binding to the receptor, thereby impairing neuromuscular and neuronal transmission. In Drysdalia coronoides (White-lipped snake), this protein is Long neurotoxin 77.